The chain runs to 283 residues: Elongation factor Ts (283 aa).

The tract at residues 80–83 is involved in Mg(2+) ion dislocation from EF-Tu; the sequence is TDFV.

This sequence belongs to the EF-Ts family.

The protein localises to the cytoplasm. Its function is as follows. Associates with the EF-Tu.GDP complex and induces the exchange of GDP to GTP. It remains bound to the aminoacyl-tRNA.EF-Tu.GTP complex up to the GTP hydrolysis stage on the ribosome. The polypeptide is Elongation factor Ts (Salmonella choleraesuis (strain SC-B67)).